The chain runs to 462 residues: tRNA modification GTPase MnmE (462 aa).

The (6S)-5-formyl-5,6,7,8-tetrahydrofolate site is built by arginine 23, glutamate 88, and arginine 127. In terms of domain architecture, TrmE-type G spans 224-383 (GLATVIIGRP…LEKAIADLFF (160 aa)). Asparagine 234 is a binding site for K(+). Residues 234 to 239 (NVGKSS), 253 to 259 (TDIPGTT), and 278 to 281 (DTAG) each bind GTP. Serine 238 lines the Mg(2+) pocket. Residues threonine 253, isoleucine 255, and threonine 258 each coordinate K(+). A Mg(2+)-binding site is contributed by threonine 259. Lysine 462 serves as a coordination point for (6S)-5-formyl-5,6,7,8-tetrahydrofolate.

This sequence belongs to the TRAFAC class TrmE-Era-EngA-EngB-Septin-like GTPase superfamily. TrmE GTPase family. As to quaternary structure, homodimer. Heterotetramer of two MnmE and two MnmG subunits. K(+) is required as a cofactor.

The protein resides in the cytoplasm. In terms of biological role, exhibits a very high intrinsic GTPase hydrolysis rate. Involved in the addition of a carboxymethylaminomethyl (cmnm) group at the wobble position (U34) of certain tRNAs, forming tRNA-cmnm(5)s(2)U34. The chain is tRNA modification GTPase MnmE from Geobacillus thermodenitrificans (strain NG80-2).